A 345-amino-acid polypeptide reads, in one-letter code: uncharacterized protein (345 aa).

A CNNM transmembrane domain is found at 1–198 (MDVLSAVLLA…LSEGLLDHEE (198 aa)). Transmembrane regions (helical) follow at residues 3-23 (VLSA…FVGA) and 95-115 (VPPA…HVLL). CBS domains are found at residues 217–280 (AVPL…PQTV) and 285–342 (VVRP…MRDG). The chain crosses the membrane as a helical span at residues 312–332 (LALVTADNGSVVGMVALEDVV).

The protein belongs to the TerC family.

Its subcellular location is the cell membrane. This is an uncharacterized protein from Mycobacterium tuberculosis (strain CDC 1551 / Oshkosh).